A 419-amino-acid chain; its full sequence is Hydrolase LUC6 (419 aa).

Residue Ser-238 is part of the active site.

It belongs to the AB hydrolase superfamily. FUS2 hydrolase family.

Its pathway is mycotoxin biosynthesis. Functionally, hydrolase; part of the gene cluster that mediates the biosynthesis of the mycotoxin lucilactaene and the lucilactaene-related compound NG-391 that act as cell cycle inhibitors with potent growth inhibitory activity against malarial parasites, moderate growth inhibitory activity against cancer cells, and no activity against bacteria and fungi. Within the pathway, LUC6 may catalyze the 2-pyrrolidone ring formation to form prelucilactaene C from prelucilactaene B, followed by C-15 hydroxylation by the same enzyme to give prelucilactaene D, epoxydation to yield prelucilactaene E, and finally cyclization to yield prelucilactaene F. The pathway begins with the hybrid PKS-NRPS synthetase LUC5 which is responsible for the condensation of one acetyl-coenzyme A (CoA) unit with six malonyl-CoA units and the amide linkage of the arising heptaketide and homoserine, subsequently releasing the first intermediate prelucilactaene B. Both the cytochrome P450 monooxygenase LUC2 and the hydrolase LUC6 function in parallel in modification of prelucilactaene B. LUC6 may catalyze the 2-pyrrolidone ring formation to form prelucilactaene C from prelucilactaene B, followed by C-15 hydroxylation by the same enzyme to give prelucilactaene D, which is then converted to prelucilactaene E by epoxidation, and finally to prelucilactaene F by cyclization. Prelucilactane D, prelucilactaene E, and prelucilactaene F can be converted to dihydrolucilactaene, NG391, and lucilactaene, respectively, via C-20 methyl group hydroxylation by the cytochrome P450 monooxygenase LUC2. However, LUC2, unlike FUS8 in fusarin C biosynthesis, is not enough for the full oxidation of the C-20 methyl group into carboxylic acid, which is a prerequisite for the final methylation step. The aldehyde dehydrogenase LUC3 is involved in the biosynthesis by further oxidation of the C-20 alcoholic analog prelucilactaene G into a carboxylic derivative. This unidentified carboxylic derivative may be converted to demethyllucilactaene. As the last step, the methyltransferase LUC1 methylates the hydroxyl group at C-21 of demethyllucilactaene to generate lucilactaene. In Fusarium sp, this protein is Hydrolase LUC6.